Here is a 397-residue protein sequence, read N- to C-terminus: MEAKGENDARAPLLAERRRNSVGSMRGEFVSRLPKKVLDAVDPERPSHVDFSRSKGLREGEKEYYEKQFATLRSFEEVDSIEESNVMSEEDDIAEQKQSEFAMKISNYANMILLALKIYATIKSGSIAIAASTLDSLLDLMAGGILWFTHLSMKSINVYKYPIGKLRVQPVGIIIFAAVMATLGFQVFVQAVEKLIVNETPDKLTPVQLTWLYSIMIFATVVKLALWLYCRTSGNKIVRAYAKDHYFDVVTNVVGLAAAVLGDMFYWWIDPVGAIALAVYTITNWSGTVWENAVSLVGESAPPEMLQKLTYLAIRHHPQIKRVDTVRAYTFGVLYFVEVDIELPEELPLKEAHAIGESLQIKIEELPEVERAFVHLDFECDHKPEHNILSKLPSSQP.

Residues 1–19 (MEAKGENDARAPLLAERRR) show a composition bias toward basic and acidic residues. Positions 1-27 (MEAKGENDARAPLLAERRRNSVGSMRG) are disordered. Topologically, residues 1–104 (MEAKGENDAR…EQKQSEFAMK (104 aa)) are cytoplasmic. Residues 105–122 (ISNYANMILLALKIYATI) traverse the membrane as a helical segment. Residues 123–126 (KSGS) are Vacuolar-facing. A helical membrane pass occupies residues 127–147 (IAIAASTLDSLLDLMAGGILW). Topologically, residues 148-170 (FTHLSMKSINVYKYPIGKLRVQP) are cytoplasmic. A helical membrane pass occupies residues 171 to 191 (VGIIIFAAVMATLGFQVFVQA). Over 192–208 (VEKLIVNETPDKLTPVQ) the chain is Vacuolar. Residues 209-229 (LTWLYSIMIFATVVKLALWLY) traverse the membrane as a helical segment. Topologically, residues 230–248 (CRTSGNKIVRAYAKDHYFD) are cytoplasmic. The helical transmembrane segment at 249 to 269 (VVTNVVGLAAAVLGDMFYWWI) threads the bilayer. Asp270 is a topological domain (vacuolar). The helical transmembrane segment at 271-291 (PVGAIALAVYTITNWSGTVWE) threads the bilayer. Residues 292–397 (NAVSLVGESA…ILSKLPSSQP (106 aa)) are Cytoplasmic-facing.

It belongs to the cation diffusion facilitator (CDF) transporter (TC 2.A.4) family. SLC30A subfamily.

It localises to the vacuole membrane. In terms of biological role, involved in sequestration of excess metal in the cytoplasm into vacuoles to maintain metal homeostasis. This is Metal tolerance protein 4 (MTP4) from Oryza sativa subsp. japonica (Rice).